A 315-amino-acid chain; its full sequence is Secreted mono- and diacylglycerol lipase LIP2 (315 aa).

The signal sequence occupies residues 1 to 21 (MACFRVILYLSVIFFVQCVFA). A disulfide bridge connects residues cysteine 68 and cysteine 308. Asparagine 74 is a glycosylation site (N-linked (GlcNAc...) asparagine). The Nucleophile role is filled by serine 182. The active site involves aspartate 240. Asparagine 265 carries an N-linked (GlcNAc...) asparagine glycan. The active site involves histidine 292.

It belongs to the AB hydrolase superfamily. Lipase family. Class 3 subfamily.

The protein resides in the secreted. The catalysed reaction is a monoacylglycerol + H2O = glycerol + a fatty acid + H(+). The enzyme catalyses a diacylglycerol + H2O = a monoacylglycerol + a fatty acid + H(+). Functionally, secreted lipase involved in Dandruff and seborrheic dermatitis (D/SD) probably via lipase-mediated breakdown of sebaceous lipids and release of irritating free fatty acids. Shows activity against monoglyceride and diglyceride substrates and generates free oleic acid from the substrates mono- and diolein. Able to cleave the oleic acid from both the 1 and the 2 position of the glycerol backbone as 1,2 isomers of diolein were converted into oleic acid and glycerol. Due to an absence of fatty acid synthase genes in Malassezia species, secretory lipases are essential for the yeast to generate free fatty acids from degradation of sebum and assimilate them as lipid sources for growth. Plays an essential role at the pathogen-host interface during disease progression. Also performs the reverse reaction to build diacylglycerols from monoacylglycerols. The sequence is that of Secreted mono- and diacylglycerol lipase LIP2 from Malassezia restricta (strain ATCC 96810 / NBRC 103918 / CBS 7877) (Seborrheic dermatitis infection agent).